A 469-amino-acid chain; its full sequence is MTAQTLYDKLWNSHVVREEEDGTVLLYIDRHLVHEVTSPQAFEGLKMAGRKLWRIDSVVSTADHNTPTGDWDKGIQDPISKLQVDTLDKNIKEFGALAYFPFMDKGQGIVHVMGPEQGATLPGMTVVCGDSHTSTHGAFGALAHGIGTSEVEHTMATQCITAKKSKSMLIAVDGKLKAGVTAKDVALYIIGQIGTAGGTGYAVEFGGEAIRSLSMEGRMTLCNMAIEAGARSGMVAVDQTTIDYVKDKPFAPEGEAWDKAVEYWRTLVSDEGAVFDKEYRFNAEDIEPQVTWGTSPEMVLDISSKVPNPAEETDPVKRSGMERALEYMGLEAGTPLNEIPVDIVFIGSCTNSRIEDLREAAAIAKDRKKAANVQRVLIVPGSGLVKEQAEKEGLDKIFIEAGFEWREPGCSMCLAMNADRLTPGQRCASTSNRNFEGRQGNGGRTHLVSPAMAAAAAVTGRFTDIRMMA.

[4Fe-4S] cluster contacts are provided by Cys-349, Cys-410, and Cys-413.

Belongs to the aconitase/IPM isomerase family. LeuC type 1 subfamily. In terms of assembly, heterodimer of LeuC and LeuD. The cofactor is [4Fe-4S] cluster.

The enzyme catalyses (2R,3S)-3-isopropylmalate = (2S)-2-isopropylmalate. It functions in the pathway amino-acid biosynthesis; L-leucine biosynthesis; L-leucine from 3-methyl-2-oxobutanoate: step 2/4. Functionally, catalyzes the isomerization between 2-isopropylmalate and 3-isopropylmalate, via the formation of 2-isopropylmaleate. The polypeptide is 3-isopropylmalate dehydratase large subunit (Neisseria meningitidis serogroup C / serotype 2a (strain ATCC 700532 / DSM 15464 / FAM18)).